A 397-amino-acid chain; its full sequence is Acetate kinase 2 (397 aa).

Residue N10 coordinates Mg(2+). K17 contacts ATP. Substrate is bound at residue R90. Catalysis depends on D147, which acts as the Proton donor/acceptor. Residues 207–211 (HLGNG), 281–283 (DAR), and 329–333 (GIGEN) contribute to the ATP site. Mg(2+) is bound at residue E385.

The protein belongs to the acetokinase family. Homodimer. It depends on Mg(2+) as a cofactor. The cofactor is Mn(2+).

The protein localises to the cytoplasm. The catalysed reaction is acetate + ATP = acetyl phosphate + ADP. Its pathway is metabolic intermediate biosynthesis; acetyl-CoA biosynthesis; acetyl-CoA from acetate: step 1/2. Catalyzes the formation of acetyl phosphate from acetate and ATP. Can also catalyze the reverse reaction. The protein is Acetate kinase 2 of Aliivibrio fischeri (strain ATCC 700601 / ES114) (Vibrio fischeri).